Here is a 207-residue protein sequence, read N- to C-terminus: uncharacterized protein (207 aa).

This is an uncharacterized protein from Methanocaldococcus jannaschii (strain ATCC 43067 / DSM 2661 / JAL-1 / JCM 10045 / NBRC 100440) (Methanococcus jannaschii).